The following is a 96-amino-acid chain: UPF0235 protein ECA3630 (96 aa).

This sequence belongs to the UPF0235 family.

The polypeptide is UPF0235 protein ECA3630 (Pectobacterium atrosepticum (strain SCRI 1043 / ATCC BAA-672) (Erwinia carotovora subsp. atroseptica)).